The following is a 1392-amino-acid chain: DNA-directed RNA polymerase subunit beta' (1392 aa).

Zn(2+) is bound by residues Cys70, Cys72, Cys85, and Cys88. The Mg(2+) site is built by Asp460, Asp462, and Asp464. Zn(2+) is bound by residues Cys810, Cys884, Cys891, and Cys894.

The protein belongs to the RNA polymerase beta' chain family. In terms of assembly, the RNAP catalytic core consists of 2 alpha, 1 beta, 1 beta' and 1 omega subunit. When a sigma factor is associated with the core the holoenzyme is formed, which can initiate transcription. The cofactor is Mg(2+). Zn(2+) serves as cofactor.

It catalyses the reaction RNA(n) + a ribonucleoside 5'-triphosphate = RNA(n+1) + diphosphate. Functionally, DNA-dependent RNA polymerase catalyzes the transcription of DNA into RNA using the four ribonucleoside triphosphates as substrates. This Geobacter metallireducens (strain ATCC 53774 / DSM 7210 / GS-15) protein is DNA-directed RNA polymerase subunit beta'.